The chain runs to 304 residues: ATP phosphoribosyltransferase (304 aa).

It belongs to the ATP phosphoribosyltransferase family. Long subfamily. It depends on Mg(2+) as a cofactor.

The protein resides in the cytoplasm. The catalysed reaction is 1-(5-phospho-beta-D-ribosyl)-ATP + diphosphate = 5-phospho-alpha-D-ribose 1-diphosphate + ATP. It participates in amino-acid biosynthesis; L-histidine biosynthesis; L-histidine from 5-phospho-alpha-D-ribose 1-diphosphate: step 1/9. With respect to regulation, feedback inhibited by histidine. Catalyzes the condensation of ATP and 5-phosphoribose 1-diphosphate to form N'-(5'-phosphoribosyl)-ATP (PR-ATP). Has a crucial role in the pathway because the rate of histidine biosynthesis seems to be controlled primarily by regulation of HisG enzymatic activity. This is ATP phosphoribosyltransferase from Xylella fastidiosa (strain 9a5c).